The following is a 256-amino-acid chain: Type III pantothenate kinase (256 aa).

6–13 (DAGNSRIK) serves as a coordination point for ATP. Residues Tyr-90 and 97–100 (GSDR) each bind substrate. The Proton acceptor role is filled by Asp-99. Thr-123 contributes to the ATP binding site. Residue Thr-187 coordinates substrate.

Belongs to the type III pantothenate kinase family. Homodimer. The cofactor is NH4(+). K(+) serves as cofactor.

It is found in the cytoplasm. It catalyses the reaction (R)-pantothenate + ATP = (R)-4'-phosphopantothenate + ADP + H(+). It participates in cofactor biosynthesis; coenzyme A biosynthesis; CoA from (R)-pantothenate: step 1/5. Catalyzes the phosphorylation of pantothenate (Pan), the first step in CoA biosynthesis. In Burkholderia mallei (strain ATCC 23344), this protein is Type III pantothenate kinase.